The primary structure comprises 140 residues: ATP synthase epsilon chain (140 aa).

Belongs to the ATPase epsilon chain family. F-type ATPases have 2 components, CF(1) - the catalytic core - and CF(0) - the membrane proton channel. CF(1) has five subunits: alpha(3), beta(3), gamma(1), delta(1), epsilon(1). CF(0) has three main subunits: a, b and c.

It localises to the cell inner membrane. Produces ATP from ADP in the presence of a proton gradient across the membrane. In Vibrio vulnificus (strain CMCP6), this protein is ATP synthase epsilon chain.